Consider the following 61-residue polypeptide: Beta-insect depressant toxin BaIT2 (61 aa).

An LCN-type CS-alpha/beta domain is found at 1-61 (DGYIRRRDGC…TWKSETNTCG (61 aa)). Intrachain disulfides connect Cys-10–Cys-60, Cys-14–Cys-35, Cys-21–Cys-42, and Cys-25–Cys-44.

The protein belongs to the long (4 C-C) scorpion toxin superfamily. Sodium channel inhibitor family. Beta subfamily. Expressed by the venom gland.

It is found in the secreted. Functionally, depressant insect beta-toxins cause a transient contraction paralysis followed by a slow flaccid paralysis. They bind voltage-independently at site-4 of sodium channels (Nav) and shift the voltage of activation toward more negative potentials thereby affecting sodium channel activation and promoting spontaneous and repetitive firing. This toxin is active only on insects. This chain is Beta-insect depressant toxin BaIT2, found in Buthacus arenicola (North African scorpion).